The chain runs to 347 residues: FMRFamide-related peptides (347 aa).

Positions 1–22 (MGIALMFLLALYQMQSAIHSEI) are cleaved as a signal peptide. Residues 23–102 (IDTPNYAGNS…RYKYDPELEA (80 aa)) constitute a propeptide that is removed on maturation. Phenylalanine amide is present on Phe-114. Tyrosine amide is present on Tyr-146. Residues Phe-157, Phe-168, Phe-179, Phe-190, Phe-201, Phe-212, Phe-223, and Phe-232 each carry the phenylalanine amide modification. A propeptide spanning residues 235–240 (SPHEEL) is cleaved from the precursor. Phenylalanine amide is present on residues Phe-250 and Phe-259. Ser-270 bears the Serine amide mark. Position 280 is a phenylalanine amide (Phe-280). A propeptide spanning residues 283–347 (SLKPAAPESK…SVEQDQFFGQ (65 aa)) is cleaved from the precursor. The segment at 283 to 347 (SLKPAAPESK…SVEQDQFFGQ (65 aa)) is disordered. Over residues 305–320 (SPVDKAMTELFKKQEL) the composition is skewed to basic and acidic residues. A compositionally biased stretch (polar residues) spans 321 to 347 (QDQQVKNGAQATTTQDGSVEQDQFFGQ).

It belongs to the FARP (FMRFamide related peptide) family. Post-translationally, this precursor includes 13 peptides that have FMRF or related sequences at their C-termini, and other putative neuropeptides.

The protein localises to the secreted. Functionally, in insects, FMRFamide and related peptides have modulatory actions at skeletal neuromuscular junctions, and peptides that are immunologically related to FMRFamide are released into the circulation from neurohemal organs. The sequence is that of FMRFamide-related peptides from Drosophila melanogaster (Fruit fly).